Consider the following 425-residue polypeptide: Gamma-glutamyl phosphate reductase (425 aa).

This sequence belongs to the gamma-glutamyl phosphate reductase family.

It is found in the cytoplasm. It catalyses the reaction L-glutamate 5-semialdehyde + phosphate + NADP(+) = L-glutamyl 5-phosphate + NADPH + H(+). The protein operates within amino-acid biosynthesis; L-proline biosynthesis; L-glutamate 5-semialdehyde from L-glutamate: step 2/2. Functionally, catalyzes the NADPH-dependent reduction of L-glutamate 5-phosphate into L-glutamate 5-semialdehyde and phosphate. The product spontaneously undergoes cyclization to form 1-pyrroline-5-carboxylate. The polypeptide is Gamma-glutamyl phosphate reductase (Novosphingobium aromaticivorans (strain ATCC 700278 / DSM 12444 / CCUG 56034 / CIP 105152 / NBRC 16084 / F199)).